The primary structure comprises 467 residues: UDP-glycosyltransferase 71D1 (467 aa).

His16 serves as the catalytic Proton acceptor. An anthocyanidin is bound at residue His16. The Charge relay role is filled by Asp122. Positions 144, 341, 356, 359, 360, 361, and 364 each coordinate UDP-alpha-D-glucose. An an anthocyanidin-binding site is contributed by Ala379. The UDP-alpha-D-glucose site is built by Glu380 and Gln381.

The protein belongs to the UDP-glycosyltransferase family.

The enzyme catalyses a flavonol + UDP-alpha-D-glucose = a flavonol 3-O-beta-D-glucoside + UDP + H(+). In terms of biological role, possesses quercetin 3-O-glucosyltransferase activity in vitro. This Arabidopsis thaliana (Mouse-ear cress) protein is UDP-glycosyltransferase 71D1 (UGT71D1).